A 520-amino-acid chain; its full sequence is Probable E3 ubiquitin-protein ligase XBOS33 (520 aa).

5 ANK repeats span residues 44–73 (GLNS…DVNV), 77–106 (CGQT…NVTR), 111–140 (SGRT…PSAP), 185–214 (GGVT…NVSA), and 228–258 (AGST…KLTL). The RING-type zinc finger occupies 327–377 (CAVCLERSCSVAAEGCCHEFCIKCALYLCSTSNTRVEFTGPPGSIPCPLCR). Residues 467–479 (QDGSEVQSPQPSH) show a composition bias toward polar residues. The disordered stretch occupies residues 467–493 (QDGSEVQSPQPSHCASMEMDKREQQDL). Over residues 484-493 (EMDKREQQDL) the composition is skewed to basic and acidic residues.

The catalysed reaction is S-ubiquitinyl-[E2 ubiquitin-conjugating enzyme]-L-cysteine + [acceptor protein]-L-lysine = [E2 ubiquitin-conjugating enzyme]-L-cysteine + N(6)-ubiquitinyl-[acceptor protein]-L-lysine.. The protein operates within protein modification; protein ubiquitination. This Oryza sativa subsp. japonica (Rice) protein is Probable E3 ubiquitin-protein ligase XBOS33 (XBOS33).